Consider the following 287-residue polypeptide: Shikimate kinase (287 aa).

Residue 87-97 (PLASGLKSSSA) participates in ATP binding.

It belongs to the GHMP kinase family. Archaeal shikimate kinase subfamily.

The protein resides in the cytoplasm. It carries out the reaction shikimate + ATP = 3-phosphoshikimate + ADP + H(+). The protein operates within metabolic intermediate biosynthesis; chorismate biosynthesis; chorismate from D-erythrose 4-phosphate and phosphoenolpyruvate: step 5/7. The chain is Shikimate kinase from Methanococcoides burtonii (strain DSM 6242 / NBRC 107633 / OCM 468 / ACE-M).